We begin with the raw amino-acid sequence, 1082 residues long: Integrator complex subunit 3 homolog (1082 aa).

Disordered stretches follow at residues 483–563 (PGPP…VSDD), 923–945 (YPSN…TAPT), and 1005–1082 (DETS…SDSD). Low complexity-rich tracts occupy residues 517–528 (PAAKAASTAASA) and 542–555 (TKPA…TTTT). The segment covering 936–945 (KSAQQNTAPT) has biased composition (polar residues). Composition is skewed to low complexity over residues 1008–1018 (STTVGRRGTSS) and 1033–1056 (EKAA…ASAK).

It belongs to the Integrator subunit 3 family. Belongs to the multiprotein complex Integrator. The core complex associates with protein phosphatase 2A subunits, to form the Integrator-PP2A (INTAC) complex.

The protein resides in the nucleus. The protein localises to the cytoplasm. Its function is as follows. Component of the integrator complex, a multiprotein complex that terminates RNA polymerase II (Pol II) transcription in the promoter-proximal region of genes. The integrator complex provides a quality checkpoint during transcription elongation by driving premature transcription termination of transcripts that are unfavorably configured for transcriptional elongation: the complex terminates transcription by (1) catalyzing dephosphorylation of the C-terminal domain (CTD) of Pol II subunit Polr2A/Rbp1 and Spt5, and (2) degrading the exiting nascent RNA transcript via endonuclease activity. The integrator complex is also involved in the 3'-end processing of the U7 snRNA, and also the spliceosomal snRNAs U1, U2, U4 and U5. In Anopheles gambiae (African malaria mosquito), this protein is Integrator complex subunit 3 homolog.